Consider the following 503-residue polypeptide: Maturase K (503 aa).

The protein belongs to the intron maturase 2 family. MatK subfamily.

Its subcellular location is the plastid. The protein localises to the chloroplast. Its function is as follows. Usually encoded in the trnK tRNA gene intron. Probably assists in splicing its own and other chloroplast group II introns. The protein is Maturase K of Liquidambar styraciflua (Sweetgum tree).